A 425-amino-acid polypeptide reads, in one-letter code: MFFVDVLWKLVPLYLFGSETKSLSATESILQIVPEAMAATSSNVLCNASESDLCRDDSAAFLLKFVAIASILLAGAAGVTIPLIGRNRRFLQTDGNLFVTAKAFAAGVILATGFVHMLAGGTEALKNPCLPDFPWSKFPFPGFFAMIAALITLFVDFMGTQYYERKQEREASESVEPFGREQSPGIVVPMIGEGTNDGKVFGEEDSGGIHIVGIHAHAAHHRHSHPPGHDSCEGHSKIDIGHAHAHGHGHGHGHGHVHGGLDAVNGARHIVVSQVLELGIVSHSIIIGLSLGVSQSPCTIRPLIAALSFHQFFEGFALGGCISQAQFRNKSATIMACFFALTTPIGIGIGTAVASSFNSHSVGALVTEGILDSLSAGILVYMALVDLIAADFLSTKMRCNFRLQIVSYVMLFLGAGLMSSLAIWA.

Residues 65-85 (FVAIASILLAGAAGVTIPLIG) form a helical membrane-spanning segment. Over 86–97 (RNRRFLQTDGNL) the chain is Cytoplasmic. A helical transmembrane segment spans residues 98–118 (FVTAKAFAAGVILATGFVHML). Over 119-137 (AGGTEALKNPCLPDFPWSK) the chain is Lumenal. Residues 138-158 (FPFPGFFAMIAALITLFVDFM) traverse the membrane as a helical segment. Residues 159 to 269 (GTQYYERKQE…GLDAVNGARH (111 aa)) lie on the Cytoplasmic side of the membrane. A helical transmembrane segment spans residues 270–290 (IVVSQVLELGIVSHSIIIGLS). At 291–301 (LGVSQSPCTIR) the chain is on the lumenal side. A helical transmembrane segment spans residues 302 to 322 (PLIAALSFHQFFEGFALGGCI). The Cytoplasmic segment spans residues 323–333 (SQAQFRNKSAT). The chain crosses the membrane as a helical span at residues 334-354 (IMACFFALTTPIGIGIGTAVA). The Lumenal segment spans residues 355–369 (SSFNSHSVGALVTEG). Residues 370–390 (ILDSLSAGILVYMALVDLIAA) traverse the membrane as a helical segment. The Cytoplasmic segment spans residues 391-404 (DFLSTKMRCNFRLQ). Residues 405-425 (IVSYVMLFLGAGLMSSLAIWA) traverse the membrane as a helical segment.

It belongs to the ZIP transporter (TC 2.A.5) family.

The protein localises to the plastid. Its subcellular location is the chloroplast thylakoid membrane. May play a role in the transport of iron in the plastids. In Arabidopsis thaliana (Mouse-ear cress), this protein is Fe(2+) transport protein 3, chloroplastic (IRT3).